The following is an 810-amino-acid chain: Volume-regulated anion channel subunit LRRC8A (810 aa).

An N-acetylmethionine modification is found at Met1. Residues 1–22 (MIPVTELRYFADTQPAYRILKP) lie on the Cytoplasmic side of the membrane. A helical membrane pass occupies residues 23 to 47 (WWDVFTDYISIVMLMIAVFGGTLQV). Residues 48 to 123 (TQDKMICLPC…YENRLHWFAK (76 aa)) are Extracellular-facing. 3 disulfide bridges follow: Cys54/Cys310, Cys57/Cys65, and Cys113/Cys295. 2 N-linked (GlcNAc...) asparagine glycosylation sites follow: Asn66 and Asn83. Residues 124-142 (YFPYLVLLHTLIFLACSNF) form a helical membrane-spanning segment. Residues 143 to 264 (WFKFPRTSSK…EEGDIVYRLY (122 aa)) are Cytoplasmic-facing. Thr200 is modified (phosphothreonine). Phosphoserine is present on Ser202. The residue at position 215 (Thr215) is a Phosphothreonine. The residue at position 217 (Ser217) is a Phosphoserine. A helical membrane pass occupies residues 265 to 286 (MRQTIIKVIKFALIICYTVYYV). At 287 to 316 (HNIKFDVDCTVDIESLTGYRTYRCAHPLAT) the chain is on the extracellular side. A helical membrane pass occupies residues 317 to 341 (LFKILASFYISLVIFYGLICMYTLW). Topologically, residues 342 to 810 (WMLRRSLKKY…RLWRADKEQA (469 aa)) are cytoplasmic. LRR repeat units follow at residues 411-422 (WTLDKLRQRLTK), 423-445 (NAQDKLELHLFMLSGIPDTVFDL), 447-468 (ELEVLKLELIPDVTIPPSIAQL), 469-492 (TGLKELWLYHTAAKIEAPALAFLR), 493-515 (ENLRALHIKFTDIKEIPLWIYSL), 518-542 (LEELHLTGNLSAENNRYIVIDGLRE), 543-565 (LKRLKVLRLKSNLSKLPQVVTDV), 567-589 (VHLQKLSINNEGTKLIVLNSLKK), 590-613 (MVNLTELELIRCDLERIPHSIFSL), 614-637 (HNLQEIDLKDNNLKTIEEIISFQH), 639-661 (HRLTCLKLWYNHIAYIPIQIGNL), 662-684 (TNLERLYLNRNKIEKIPTQLFYC), 686-707 (KLRYLDLSHNNLTFLPADIGLL), 708-730 (QNLQNLAVTANRIEALPPELFQC), 732-753 (KLRALHLGNNVLQSLPSRVGEL), 754-776 (TNLTQIELRGNRLECLPVELGEC), and 778-801 (LLKRSGLVVEEDLFSTLPPEVKER). The Di-leucine motif signature appears at 706–707 (LL).

Belongs to the LRRC8 family. As to quaternary structure, heterohexamer; oligomerizes with other LRRC8 proteins (LRRC8B, LRRC8C, LRRC8D and/or LRRC8E) to form a heterohexamer. Can form homohexamers in vitro, but these have lower conductance than heterohexamers. In vivo, the subunit composition may depend primarily on expression levels, and heterooligomeric channels containing various proportions of the different LRRC8 proteins may coexist. Interact with GRB2. Interacts with NOX4; this interaction prevents the ubiquitin-mediated degradation of LRRC8A. In terms of processing, N-glycosylated. As to expression, ubiquitously expressed. High levels detected in the bone marrow; lower levels found in peripheral blood cells. Highly expressed in pancreatic beta cells.

The protein localises to the cell membrane. It localises to the lysosome membrane. It carries out the reaction chloride(in) = chloride(out). The catalysed reaction is iodide(out) = iodide(in). The enzyme catalyses taurine(out) = taurine(in). It catalyses the reaction L-aspartate(out) = L-aspartate(in). It carries out the reaction L-glutamate(out) = L-glutamate(in). The catalysed reaction is myo-inositol(out) = myo-inositol(in). The enzyme catalyses 2',3'-cGAMP(out) = 2',3'-cGAMP(in). Inhibited by (4-[(2-butyl-6,7-dichloro-2-cyclopentyl-2,3-dihydro-1-oxo-1H-inden-5-yl)oxy]butanoic acid), which plugs the channel like a cork in a bottle by binding in the extracellular selectivity filter and sterically occluding ion conduction. Lipids may block conduction in closed heterohexameric channels. In terms of biological role, essential component of the volume-regulated anion channel (VRAC, also named VSOAC channel), an anion channel required to maintain a constant cell volume in response to extracellular or intracellular osmotic changes. The VRAC channel conducts iodide better than chloride and can also conduct organic osmolytes like taurine. Mediates efflux of amino acids, such as aspartate and glutamate, in response to osmotic stress. In complex with LRRC8C or LRRC8E, acts as a transporter of immunoreactive cyclic dinucleotide GMP-AMP (2'-3'-cGAMP), an immune messenger produced in response to DNA virus in the cytosol: mediates both import and export of 2'-3'-cGAMP, thereby promoting transfer of 2'-3'-cGAMP to bystander cells. In contrast, complexes containing LRRC8D inhibit transport of 2'-3'-cGAMP. Required for in vivo channel activity, together with at least one other family member (LRRC8B, LRRC8C, LRRC8D or LRRC8E); channel characteristics depend on the precise subunit composition. Can form functional channels by itself (in vitro). Involved in B-cell development: required for the pro-B cell to pre-B cell transition. Also required for T-cell development. Required for myoblast differentiation: VRAC activity promotes membrane hyperpolarization and regulates insulin-stimulated glucose metabolism and oxygen consumption. Also acts as a regulator of glucose-sensing in pancreatic beta cells: VRAC currents, generated in response to hypotonicity- or glucose-induced beta cell swelling, depolarize cells, thereby causing electrical excitation, leading to increase glucose sensitivity and insulin secretion. Also plays a role in lysosome homeostasis by forming functional lysosomal VRAC channels in response to low cytoplasmic ionic strength condition: lysosomal VRAC channels are necessary for the formation of large lysosome-derived vacuoles, which store and then expel excess water to maintain cytosolic water homeostasis. Acts as a key factor in NLRP3 inflammasome activation by modulating itaconate efflux and mitochondria function. The chain is Volume-regulated anion channel subunit LRRC8A from Mus musculus (Mouse).